A 415-amino-acid chain; its full sequence is Gamma-glutamyl phosphate reductase (415 aa).

The protein belongs to the gamma-glutamyl phosphate reductase family.

It localises to the cytoplasm. The catalysed reaction is L-glutamate 5-semialdehyde + phosphate + NADP(+) = L-glutamyl 5-phosphate + NADPH + H(+). It functions in the pathway amino-acid biosynthesis; L-proline biosynthesis; L-glutamate 5-semialdehyde from L-glutamate: step 2/2. Functionally, catalyzes the NADPH-dependent reduction of L-glutamate 5-phosphate into L-glutamate 5-semialdehyde and phosphate. The product spontaneously undergoes cyclization to form 1-pyrroline-5-carboxylate. The sequence is that of Gamma-glutamyl phosphate reductase from Clostridium perfringens (strain 13 / Type A).